A 146-amino-acid chain; its full sequence is Cyanate hydratase (146 aa).

Residues R87, E90, and S113 contribute to the active site.

The protein belongs to the cyanase family.

It carries out the reaction cyanate + hydrogencarbonate + 3 H(+) = NH4(+) + 2 CO2. In terms of biological role, catalyzes the reaction of cyanate with bicarbonate to produce ammonia and carbon dioxide. In Trichormus variabilis (strain ATCC 29413 / PCC 7937) (Anabaena variabilis), this protein is Cyanate hydratase.